The following is a 545-amino-acid chain: Ribulokinase (545 aa).

This sequence belongs to the ribulokinase family.

The enzyme catalyses D-ribulose + ATP = D-ribulose 5-phosphate + ADP + H(+). It carries out the reaction L-ribulose + ATP = L-ribulose 5-phosphate + ADP + H(+). It functions in the pathway carbohydrate degradation; L-arabinose degradation via L-ribulose; D-xylulose 5-phosphate from L-arabinose (bacterial route): step 2/3. In Staphylococcus aureus (strain bovine RF122 / ET3-1), this protein is Ribulokinase.